The sequence spans 21 residues: Peptide PGLa-R6 (21 aa).

The residue at position 21 (L21) is a Leucine amide.

Expressed by the skin glands.

The protein resides in the secreted. In terms of biological role, antimicrobial peptide. The polypeptide is Peptide PGLa-R6 (Xenopus ruwenzoriensis (Uganda clawed frog)).